The chain runs to 195 residues: Probable nicotinate-nucleotide adenylyltransferase (195 aa).

Belongs to the NadD family.

It carries out the reaction nicotinate beta-D-ribonucleotide + ATP + H(+) = deamido-NAD(+) + diphosphate. The protein operates within cofactor biosynthesis; NAD(+) biosynthesis; deamido-NAD(+) from nicotinate D-ribonucleotide: step 1/1. Its function is as follows. Catalyzes the reversible adenylation of nicotinate mononucleotide (NaMN) to nicotinic acid adenine dinucleotide (NaAD). In Opitutus terrae (strain DSM 11246 / JCM 15787 / PB90-1), this protein is Probable nicotinate-nucleotide adenylyltransferase.